The chain runs to 162 residues: Class I hydrophobin dewC (162 aa).

A signal peptide spans 1–21 (MQFTIASLIATAVLGLQMASA). Intrachain disulfides connect cysteine 43-cysteine 119, cysteine 50-cysteine 113, cysteine 51-cysteine 90, and cysteine 120-cysteine 156.

This sequence belongs to the fungal hydrophobin family. In terms of assembly, self-assembles to form functional amyloid fibrils called rodlets. Self-assembly into fibrillar rodlets occurs spontaneously at hydrophobic:hydrophilic interfaces and the rodlets further associate laterally to form amphipathic monolayers.

The protein localises to the secreted. The protein resides in the spore wall. Its function is as follows. Aerial growth, conidiation, and dispersal of filamentous fungi in the environment rely upon a capability of their secreting small amphipathic proteins called hydrophobins (HPBs) with low sequence identity. Class I can self-assemble into an outermost layer of rodlet bundles on aerial cell surfaces, conferring cellular hydrophobicity that supports fungal growth, development and dispersal; whereas Class II form highly ordered films at water-air interfaces through intermolecular interactions but contribute nothing to the rodlet structure. DewC is a class I hydrophobin that contributes to the hydrophobicity of the spore surface. The chain is Class I hydrophobin dewC from Emericella nidulans (strain FGSC A4 / ATCC 38163 / CBS 112.46 / NRRL 194 / M139) (Aspergillus nidulans).